We begin with the raw amino-acid sequence, 225 residues long: Phosphatidylserine decarboxylase proenzyme (225 aa).

Ser189 serves as the catalytic Schiff-base intermediate with substrate; via pyruvic acid. Ser189 is subject to Pyruvic acid (Ser); by autocatalysis.

The protein belongs to the phosphatidylserine decarboxylase family. PSD-A subfamily. In terms of assembly, heterodimer of a large membrane-associated beta subunit and a small pyruvoyl-containing alpha subunit. Pyruvate serves as cofactor. Is synthesized initially as an inactive proenzyme. Formation of the active enzyme involves a self-maturation process in which the active site pyruvoyl group is generated from an internal serine residue via an autocatalytic post-translational modification. Two non-identical subunits are generated from the proenzyme in this reaction, and the pyruvate is formed at the N-terminus of the alpha chain, which is derived from the carboxyl end of the proenzyme. The post-translation cleavage follows an unusual pathway, termed non-hydrolytic serinolysis, in which the side chain hydroxyl group of the serine supplies its oxygen atom to form the C-terminus of the beta chain, while the remainder of the serine residue undergoes an oxidative deamination to produce ammonia and the pyruvoyl prosthetic group on the alpha chain.

It localises to the cell membrane. The catalysed reaction is a 1,2-diacyl-sn-glycero-3-phospho-L-serine + H(+) = a 1,2-diacyl-sn-glycero-3-phosphoethanolamine + CO2. It participates in phospholipid metabolism; phosphatidylethanolamine biosynthesis; phosphatidylethanolamine from CDP-diacylglycerol: step 2/2. Its function is as follows. Catalyzes the formation of phosphatidylethanolamine (PtdEtn) from phosphatidylserine (PtdSer). The polypeptide is Phosphatidylserine decarboxylase proenzyme (Amoebophilus asiaticus (strain 5a2)).